The following is a 506-amino-acid chain: Maturase K (506 aa).

Belongs to the intron maturase 2 family. MatK subfamily.

The protein resides in the plastid. Its subcellular location is the chloroplast. In terms of biological role, usually encoded in the trnK tRNA gene intron. Probably assists in splicing its own and other chloroplast group II introns. The sequence is that of Maturase K from Melilotus indicus (Sourclover).